The chain runs to 297 residues: Ribosomal RNA small subunit methyltransferase H (297 aa).

Residues 30–32 (GGY), D48, F75, D96, and Q103 contribute to the S-adenosyl-L-methionine site.

This sequence belongs to the methyltransferase superfamily. RsmH family.

It localises to the cytoplasm. It carries out the reaction cytidine(1402) in 16S rRNA + S-adenosyl-L-methionine = N(4)-methylcytidine(1402) in 16S rRNA + S-adenosyl-L-homocysteine + H(+). Specifically methylates the N4 position of cytidine in position 1402 (C1402) of 16S rRNA. This is Ribosomal RNA small subunit methyltransferase H from Ehrlichia chaffeensis (strain ATCC CRL-10679 / Arkansas).